A 514-amino-acid chain; its full sequence is 2,3-bisphosphoglycerate-independent phosphoglycerate mutase (514 aa).

Residues aspartate 14 and serine 64 each coordinate Mn(2+). The active-site Phosphoserine intermediate is serine 64. Residues histidine 125, 155 to 156 (RD), arginine 187, arginine 193, 263 to 266 (RADR), and lysine 336 each bind substrate. Mn(2+)-binding residues include aspartate 403, histidine 407, aspartate 444, histidine 445, and histidine 463.

It belongs to the BPG-independent phosphoglycerate mutase family. As to quaternary structure, monomer. The cofactor is Mn(2+).

It carries out the reaction (2R)-2-phosphoglycerate = (2R)-3-phosphoglycerate. It functions in the pathway carbohydrate degradation; glycolysis; pyruvate from D-glyceraldehyde 3-phosphate: step 3/5. In terms of biological role, catalyzes the interconversion of 2-phosphoglycerate and 3-phosphoglycerate. The chain is 2,3-bisphosphoglycerate-independent phosphoglycerate mutase from Shewanella baltica (strain OS195).